A 234-amino-acid polypeptide reads, in one-letter code: CHD1 helical C-terminal domain containing protein 1 (234 aa).

Residues 1–38 form a disordered region; sequence MEASDGQADEREEPLEQGTNARSLERRSSTTPAKDSLV. Positions 44 to 145 are CHD1 helical C-terminal domain (CHCT); it reads LDRDTFKICK…NNQTTKFLMA (102 aa). A disordered region spans residues 200-234; sequence LRARGPRRRGSKLPQEPKLKRRRIKEAPDTPETCL.

The protein localises to the cytoplasm. It localises to the nucleus. Functionally, may play a role in regulation of apoptosis. The chain is CHD1 helical C-terminal domain containing protein 1 (CHCT1) from Bos taurus (Bovine).